A 209-amino-acid chain; its full sequence is Chromophore lyase CpcT/CpeT 1 (209 aa).

The protein belongs to the CpcT/CpeT biliprotein lyase family.

Its function is as follows. Covalently attaches a chromophore to Cys residue(s) of phycobiliproteins. This Trichodesmium erythraeum (strain IMS101) protein is Chromophore lyase CpcT/CpeT 1.